Reading from the N-terminus, the 111-residue chain is Probable 4-amino-4-deoxy-L-arabinose-phosphoundecaprenol flippase subunit ArnE (111 aa).

3 helical membrane-spanning segments follow: residues 38-58, 61-81, and 91-111; these read LWLGLALICMGAAMVLWLLVL, LPVGIAYPMLSLNFVWVTLAA, and PRHWLGVALIISGIIILGSAA. Residues 40-109 form the EamA domain; sequence LGLALICMGA…IISGIIILGS (70 aa).

It belongs to the ArnE family. As to quaternary structure, heterodimer of ArnE and ArnF.

The protein resides in the cell inner membrane. The protein operates within bacterial outer membrane biogenesis; lipopolysaccharide biosynthesis. Its function is as follows. Translocates 4-amino-4-deoxy-L-arabinose-phosphoundecaprenol (alpha-L-Ara4N-phosphoundecaprenol) from the cytoplasmic to the periplasmic side of the inner membrane. This is Probable 4-amino-4-deoxy-L-arabinose-phosphoundecaprenol flippase subunit ArnE from Salmonella heidelberg (strain SL476).